Here is a 386-residue protein sequence, read N- to C-terminus: DNase toxin Tse7 (386 aa).

As to quaternary structure, interacts with Tsi7.

The catalysed reaction is Endonucleolytic cleavage to 5'-phosphodinucleotide and 5'-phosphooligonucleotide end-products.. Type VI secretion exported toxin that via to its DNase activity induces growth arrest and ultimately DNA degradation within target cell. The activity is initially neutralized by a cognate immunity protein Tsi7. The protein is DNase toxin Tse7 of Pseudomonas aeruginosa (strain ATCC 15692 / DSM 22644 / CIP 104116 / JCM 14847 / LMG 12228 / 1C / PRS 101 / PAO1).